The primary structure comprises 492 residues: 2-succinylbenzoate--CoA ligase (492 aa).

This sequence belongs to the ATP-dependent AMP-binding enzyme family. MenE subfamily.

The catalysed reaction is 2-succinylbenzoate + ATP + CoA = 2-succinylbenzoyl-CoA + AMP + diphosphate. The protein operates within quinol/quinone metabolism; 1,4-dihydroxy-2-naphthoate biosynthesis; 1,4-dihydroxy-2-naphthoate from chorismate: step 5/7. Its pathway is quinol/quinone metabolism; menaquinone biosynthesis. Converts 2-succinylbenzoate (OSB) to 2-succinylbenzoyl-CoA (OSB-CoA). This chain is 2-succinylbenzoate--CoA ligase, found in Staphylococcus aureus (strain MRSA252).